Here is a 669-residue protein sequence, read N- to C-terminus: p135Gag-Myb-Ets-transforming protein (669 aa).

A compositionally biased stretch (basic and acidic residues) spans 1 to 10 (NSTMRRKVEQ). 2 disordered regions span residues 1-27 (NSTM…SATT) and 132-153 (TQNH…NTMT). Residues 90 to 142 (PAAAAIQRHYNDEDPEKEKRIKELELLLMSTENELKGQQALPTQNHTANYPGW) form a transcriptional activation domain region. Residues 276–361 (ATFSGFAKEQ…EHLEILQKEE (86 aa)) form the PNT domain. Residues 556 to 640 (GSGPIQLWQF…AGKRYVYRFV (85 aa)) constitute a DNA-binding region (ETS).

The protein localises to the host nucleus. Its function is as follows. DNA-binding protein that specifically recognizes the sequence 5'-YAAC[GT]G-3'. The Myb-Ets protein induces predominantly erythroblastosis in chicken and transforms avian erythroblasts and immature myelomonocytic cells in culture. It appears that the Ets domain is responsible for the effects on erythroid cells and that the Myb domain encodes the myeloid-transforming capacity. The chain is p135Gag-Myb-Ets-transforming protein (GAG) from Avian leukemia virus E26.